The primary structure comprises 149 residues: Nucleoside diphosphate kinase (149 aa).

Positions 9, 57, 85, 91, 102, and 112 each coordinate ATP. The active-site Pros-phosphohistidine intermediate is the histidine 115.

Belongs to the NDK family. As to quaternary structure, homotetramer. Requires Mg(2+) as cofactor.

The protein resides in the cytoplasm. It carries out the reaction dZDP + ATP = dZTP + ADP. The enzyme catalyses a 2'-deoxyribonucleoside 5'-diphosphate + ATP = a 2'-deoxyribonucleoside 5'-triphosphate + ADP. It catalyses the reaction a ribonucleoside 5'-diphosphate + ATP = a ribonucleoside 5'-triphosphate + ADP. It functions in the pathway purine metabolism. Functionally, major role in the synthesis of nucleoside triphosphates other than ATP. The ATP gamma phosphate is transferred to the NDP beta phosphate via a ping-pong mechanism, using a phosphorylated active-site intermediate. In terms of biological role, (Microbial infection) Catalyzes the phosphorylation of dZDP to dZTP, when the bacterium is infected by a phage that produces the substrate for the synthesis of dZTP (2- amino-2'-deoxyadenosine 5'-triphosphate), which is then used by the phage as a DNA polymerase substrate. The chain is Nucleoside diphosphate kinase from Synechococcus sp. (strain JA-3-3Ab) (Cyanobacteria bacterium Yellowstone A-Prime).